We begin with the raw amino-acid sequence, 424 residues long: MRLSDYYVPTLKETSADISVISHKYSIRAGLIKQIASGIYTWLPLGLKVLKNIENIVREEMNKSGSLEILMPLIQPASLWKESGRYDDYGSEMLRITDRNQREMLFGPTHEEVITDILRTTPVSHKDLPLILYQIQWKFRDELRPRYGIMRCREFLMKDAYSFDKDFSGAISSYNLMFKTYIKIFQKLGLTPIAVKADSGPIGGNLSHEFHVLANSGESTLYYDQDIIELMNSESIDVEKIKNTYTAADDMHDPQACPISSDKVKISKGIEIGHIFHLGDKYSKPMNANFCDSNNNKLLQMGCYGIGVSRLVAAIIEVFHDNKGIIWPETVAPFKFSLVNLYTSNDKCKKVAENLHMQLYDDVLYDDTDDSPGIKLARTDLLGMPWQVIIGKSTVEQDLIEVRNRLTKDKVLISTEQFLNKLKK.

The protein belongs to the class-II aminoacyl-tRNA synthetase family. ProS type 2 subfamily. As to quaternary structure, homodimer.

It localises to the cytoplasm. It catalyses the reaction tRNA(Pro) + L-proline + ATP = L-prolyl-tRNA(Pro) + AMP + diphosphate. In terms of biological role, catalyzes the attachment of proline to tRNA(Pro) in a two-step reaction: proline is first activated by ATP to form Pro-AMP and then transferred to the acceptor end of tRNA(Pro). The sequence is that of Proline--tRNA ligase from Ehrlichia chaffeensis (strain ATCC CRL-10679 / Arkansas).